The primary structure comprises 157 residues: Small ribosomal subunit protein bS16 (157 aa).

The tract at residues 114–157 (NEGPTAEAITEKKKKAKEEAAAKAAAEAEAAAKAEEAPAEEAAE) is disordered.

The protein belongs to the bacterial ribosomal protein bS16 family.

The protein is Small ribosomal subunit protein bS16 of Corynebacterium diphtheriae (strain ATCC 700971 / NCTC 13129 / Biotype gravis).